Here is a 334-residue protein sequence, read N- to C-terminus: HTH-type transcriptional repressor PurR (334 aa).

One can recognise an HTH lacI-type domain in the interval alanine 2–valine 56. Residues isoleucine 4–asparagine 23 constitute a DNA-binding region (H-T-H motif). The DNA-binding element occupies serine 48–valine 56. Hypoxanthine is bound by residues tyrosine 73, lysine 189, threonine 191, phenylalanine 220, and aspartate 274.

Homodimer.

Its pathway is purine metabolism; purine nucleotide biosynthesis [regulation]. Functionally, is the main repressor of the genes involved in the de novo synthesis of purine nucleotides, regulating purB, purC, purEK, purF, purHD, purL, purMN and guaBA expression. PurR is allosterically activated to bind its cognate DNA by binding the purine corepressors, hypoxanthine or guanine, thereby effecting transcription repression. This Pasteurella multocida (strain Pm70) protein is HTH-type transcriptional repressor PurR.